The sequence spans 345 residues: 3-isopropylmalate dehydrogenase (345 aa).

Position 74–87 (74–87 (GPKWDGLPRKIRPE)) interacts with NAD(+). 4 residues coordinate substrate: Arg94, Arg104, Arg132, and Asp217. Mg(2+) contacts are provided by Asp217, Asp241, and Asp245. Residue 274–286 (GSAPDIAGKGIAN) participates in NAD(+) binding.

Belongs to the isocitrate and isopropylmalate dehydrogenases family. LeuB type 1 subfamily. As to quaternary structure, homodimer. Mg(2+) is required as a cofactor. Requires Mn(2+) as cofactor.

It localises to the cytoplasm. The catalysed reaction is (2R,3S)-3-isopropylmalate + NAD(+) = 4-methyl-2-oxopentanoate + CO2 + NADH. It participates in amino-acid biosynthesis; L-leucine biosynthesis; L-leucine from 3-methyl-2-oxobutanoate: step 3/4. Catalyzes the oxidation of 3-carboxy-2-hydroxy-4-methylpentanoate (3-isopropylmalate) to 3-carboxy-4-methyl-2-oxopentanoate. The product decarboxylates to 4-methyl-2 oxopentanoate. This Thermus thermophilus (strain ATCC 27634 / DSM 579 / HB8) protein is 3-isopropylmalate dehydrogenase (leuB).